The chain runs to 673 residues: Beta-galactosidase 8 (673 aa).

Positions 1–20 are cleaved as a signal peptide; sequence MGPSRSFQNLLLLLLPLALA. An N-linked (GlcNAc...) asparagine glycan is attached at Asn-38. Catalysis depends on Glu-189, which acts as the Proton donor. Asn-230 is a glycosylation site (N-linked (GlcNAc...) asparagine). Catalysis depends on Glu-272, which acts as the Nucleophile. N-linked (GlcNAc...) asparagine glycosylation is found at Asn-304, Asn-329, Asn-401, Asn-489, and Asn-540.

This sequence belongs to the glycosyl hydrolase 35 family.

It localises to the secreted. It is found in the extracellular space. The protein resides in the apoplast. The enzyme catalyses Hydrolysis of terminal non-reducing beta-D-galactose residues in beta-D-galactosides.. The chain is Beta-galactosidase 8 from Oryza sativa subsp. japonica (Rice).